Here is a 227-residue protein sequence, read N- to C-terminus: Ornithine decarboxylase antizyme 1 (227 aa).

This sequence belongs to the ODC antizyme family. As to quaternary structure, interacts with ODC1 and thereby sterically blocks ODC homodimerization. Forms a ternary complex with PSMB4 and OAZ1 before PSMB4 is incorporated into the 20S proteasome. Interacts with AZIN2; this interaction disrupts the interaction between the antizyme and ODC1. Interacts with FAM171A1.

Its function is as follows. Ornithine decarboxylase (ODC) antizyme protein that negatively regulates ODC activity and intracellular polyamine biosynthesis and uptake in response to increased intracellular polyamine levels. Binds to ODC monomers, inhibiting the assembly of the functional ODC homodimer, and targets the monomers for ubiquitin-independent proteolytic destruction by the 26S proteasome. Triggers ODC degradation by inducing the exposure of a cryptic proteasome-interacting surface of ODC. Stabilizes AZIN2 by interfering with its ubiquitination. Also inhibits cellular uptake of polyamines by inactivating the polyamine uptake transporter. SMAD1/OAZ1/PSMB4 complex mediates the degradation of the CREBBP/EP300 repressor SNIP1. Involved in the translocation of AZIN2 from ER-Golgi intermediate compartment (ERGIC) to the cytosol. In Mus musculus (Mouse), this protein is Ornithine decarboxylase antizyme 1 (Oaz1).